Reading from the N-terminus, the 634-residue chain is DNA-directed RNA polymerase subunit gamma (634 aa).

Positions 74, 76, 89, and 92 each coordinate Zn(2+). 3 residues coordinate Mg(2+): D471, D473, and D475.

Belongs to the RNA polymerase beta' chain family. RpoC1 subfamily. In cyanobacteria the RNAP catalytic core is composed of 2 alpha, 1 beta, 1 beta', 1 gamma and 1 omega subunit. When a sigma factor is associated with the core the holoenzyme is formed, which can initiate transcription. The cofactor is Mg(2+). Zn(2+) serves as cofactor.

The catalysed reaction is RNA(n) + a ribonucleoside 5'-triphosphate = RNA(n+1) + diphosphate. In terms of biological role, DNA-dependent RNA polymerase catalyzes the transcription of DNA into RNA using the four ribonucleoside triphosphates as substrates. The sequence is that of DNA-directed RNA polymerase subunit gamma from Prochlorococcus marinus (strain MIT 9303).